The chain runs to 94 residues: Aspartyl/glutamyl-tRNA(Asn/Gln) amidotransferase subunit C (94 aa).

Positions 72-94 (PREKALQGAPEVSEGQFKVPRVV) are disordered.

It belongs to the GatC family. In terms of assembly, heterotrimer of A, B and C subunits.

The catalysed reaction is L-glutamyl-tRNA(Gln) + L-glutamine + ATP + H2O = L-glutaminyl-tRNA(Gln) + L-glutamate + ADP + phosphate + H(+). The enzyme catalyses L-aspartyl-tRNA(Asn) + L-glutamine + ATP + H2O = L-asparaginyl-tRNA(Asn) + L-glutamate + ADP + phosphate + 2 H(+). Functionally, allows the formation of correctly charged Asn-tRNA(Asn) or Gln-tRNA(Gln) through the transamidation of misacylated Asp-tRNA(Asn) or Glu-tRNA(Gln) in organisms which lack either or both of asparaginyl-tRNA or glutaminyl-tRNA synthetases. The reaction takes place in the presence of glutamine and ATP through an activated phospho-Asp-tRNA(Asn) or phospho-Glu-tRNA(Gln). This chain is Aspartyl/glutamyl-tRNA(Asn/Gln) amidotransferase subunit C, found in Moorella thermoacetica (strain ATCC 39073 / JCM 9320).